A 340-amino-acid chain; its full sequence is Adenosine kinase (340 aa).

The active site involves aspartate 293.

This sequence belongs to the carbohydrate kinase PfkB family. As to quaternary structure, monomer. Mg(2+) is required as a cofactor.

The enzyme catalyses adenosine + ATP = AMP + ADP + H(+). Its pathway is purine metabolism; AMP biosynthesis via salvage pathway; AMP from adenosine: step 1/1. Functionally, ATP dependent phosphorylation of adenosine and other related nucleoside analogs to monophosphate derivatives. The polypeptide is Adenosine kinase (adk) (Dictyostelium discoideum (Social amoeba)).